Consider the following 581-residue polypeptide: Penicillin-binding protein activator LpoA (581 aa).

An N-terminal signal peptide occupies residues 1 to 26 (MLSILMQGLRLKKCFLPILVMFFLAG). Cys27 is lipidated: N-palmitoyl cysteine. Cys27 carries S-diacylglycerol cysteine lipidation.

This sequence belongs to the LpoA family. As to quaternary structure, interacts with PBP1a.

Its subcellular location is the cell outer membrane. Its function is as follows. Regulator of peptidoglycan synthesis that is essential for the function of penicillin-binding protein 1A (PBP1a). In Histophilus somni (strain 129Pt) (Haemophilus somnus), this protein is Penicillin-binding protein activator LpoA.